A 376-amino-acid chain; its full sequence is WW domain-binding protein 4 (376 aa).

The Matrin-type zinc finger occupies 11–42; the sequence is KFCDYCKCWIADNRPSVEFHERGKNHKENVAK. Low complexity predominate over residues 94–107; that stretch reads ITPVTSTIPPTSTS. Disordered stretches follow at residues 94–128, 189–335, and 356–376; these read ITPV…KGRW, SRWE…EPKV, and FKKR…GDDQ. 2 consecutive WW domains span residues 122–155 and 163–196; these read DPSK…KPEG and TAVK…KPDD. Residues 189–198 are compositionally biased toward basic and acidic residues; sequence SRWEKPDDFI. Positions 203 to 215 are enriched in polar residues; sequence DLPSSKVNENSLG. 2 stretches are compositionally biased toward basic and acidic residues: residues 218–229 and 243–257; these read DESKSSDSHSDS and ETEK…KNKN. Phosphoserine occurs at positions 220, 227, and 229. Serine 262 is modified (phosphoserine). The span at 298 to 309 shows a compositional bias: basic and acidic residues; sequence QEIKQEVESHEE. The segment covering 316-326 has biased composition (polar residues); the sequence is STENEYVSTSE. Residues 357–375 form an interaction with SNRNP200 region; that stretch reads KKRRTENGKSRNLRQRGDD. Residues 361 to 376 show a composition bias toward basic and acidic residues; it reads TENGKSRNLRQRGDDQ.

Component of the spliceosome B complex. Associated with U2 snRNPs. Binds splicing factors SNRPB, SNRPC and SF1. Interacts via the WW domains with the Pro-rich domains of KHDRBS1/SAM68. Interacts via the WW domains with the Pro-rich domains of WBP11. Interacts with SNRNP200.

It localises to the nucleus. It is found in the nucleus speckle. In terms of biological role, involved in pre-mRNA splicing as a component of the spliceosome. May play a role in cross-intron bridging of U1 and U2 snRNPs in the mammalian A complex. The polypeptide is WW domain-binding protein 4 (WBP4) (Homo sapiens (Human)).